The chain runs to 281 residues: MSMGIVEGAFLGLVQGLTEFLPISSSGHLAVVGTLLGSDPGAAFTAICQLGTEAAVIGYFRKDIARIIGHWARSLVGRLPRNDPDARMGWLVTLGTIPIGVLGLLFQDSIETVLRGFVVIGTTLWLFALVLGAADRFGRKERTLDQLSWKHGLLFGLAQALALIPGVSRSGGTITMGLLLGYTREAAARYSFLLAIPAVVLSGFYQLYDELSRGTTIAWVPTAVATVVAFVVGYAVIAWLMRFISTHSYTPFVVYRIAAAVVVYALVLAGALPAFQGTGGS.

A run of 6 helical transmembrane segments spans residues 90-110 (WLVT…QDSI), 113-133 (VLRG…VLGA), 147-167 (LSWK…IPGV), 191-211 (SFLL…YDEL), 217-237 (IAWV…YAVI), and 257-277 (IAAA…AFQG).

Belongs to the UppP family.

It is found in the cell membrane. The enzyme catalyses di-trans,octa-cis-undecaprenyl diphosphate + H2O = di-trans,octa-cis-undecaprenyl phosphate + phosphate + H(+). Functionally, catalyzes the dephosphorylation of undecaprenyl diphosphate (UPP). Confers resistance to bacitracin. The sequence is that of Undecaprenyl-diphosphatase from Kineococcus radiotolerans (strain ATCC BAA-149 / DSM 14245 / SRS30216).